We begin with the raw amino-acid sequence, 1034 residues long: Tubulin glycylase 3D (1034 aa).

2 stretches are compositionally biased toward polar residues: residues 1–13 (MINS…QTLN) and 131–146 (QVNS…QNDF). Disordered stretches follow at residues 1-21 (MINS…SQMD), 131-166 (QVNS…STDY), and 189-208 (LNQQ…DNSQ). Over residues 151-161 (RKPKNPTTKKR) the composition is skewed to basic residues. A compositionally biased stretch (low complexity) spans 189-199 (LNQQNQQQQDL). The region spanning 571–930 (DINNVIDDEK…YGMAQKSGIK (360 aa)) is the TTL domain. Residues 741-744 (QKYI), Lys-754, and Asp-756 each bind ATP. Residues 1002-1034 (HDQKQFSSQQANNIETYSRPQTAKSQTQSSKKL) are disordered.

The protein resides in the cytoplasm. Its function is as follows. Probable glycylase which modifies tubulin, generating side chains of glycine on the gamma-carboxyl groups of specific glutamate residues within the C-terminal tail of tubulin. The protein is Tubulin glycylase 3D (TTLL3D) of Tetrahymena thermophila (strain SB210).